The sequence spans 299 residues: Recombination-associated protein RdgC (299 aa).

It belongs to the RdgC family.

It localises to the cytoplasm. Its subcellular location is the nucleoid. In terms of biological role, may be involved in recombination. This Neisseria meningitidis serogroup C (strain 053442) protein is Recombination-associated protein RdgC.